A 492-amino-acid chain; its full sequence is GTPase Der (492 aa).

2 consecutive EngA-type G domains span residues 3–166 and 205–378; these read PVVA…VDEV and IKLA…DSAT. GTP-binding positions include 9-16, 56-60, 118-121, 211-218, 258-262, and 323-326; these read GRPNVGKS, DTGGI, NKTD, DTAGV, and NKWD. Residues 379 to 463 enclose the KH-like domain; that stretch reads RRVSTAMLTR…PIRIQFKEGE (85 aa).

This sequence belongs to the TRAFAC class TrmE-Era-EngA-EngB-Septin-like GTPase superfamily. EngA (Der) GTPase family. In terms of assembly, associates with the 50S ribosomal subunit.

In terms of biological role, GTPase that plays an essential role in the late steps of ribosome biogenesis. The chain is GTPase Der from Klebsiella pneumoniae subsp. pneumoniae (strain ATCC 700721 / MGH 78578).